The primary structure comprises 52 residues: Large ribosomal subunit protein bL33 (52 aa).

This sequence belongs to the bacterial ribosomal protein bL33 family.

In Anaeromyxobacter dehalogenans (strain 2CP-C), this protein is Large ribosomal subunit protein bL33.